A 573-amino-acid chain; its full sequence is MLO-like protein 2 (573 aa).

The Extracellular segment spans residues 1-15 (MADQVKERTLEETST). The chain crosses the membrane as a helical span at residues 16-36 (WAVAVVCFVLLFISIVLEHSI). The Cytoplasmic segment spans residues 37–61 (HKIGTWFKKKHKQALFEALEKVKAE). Residues 62–82 (LMLLGFISLLLTIGQTPISNI) traverse the membrane as a helical segment. Residues 83–164 (CISQKVASTM…VSAYGIHQLH (82 aa)) are Extracellular-facing. The chain crosses the membrane as a helical span at residues 165–185 (IFIFVLAVVHVVYCIVTYAFG). The Cytoplasmic segment spans residues 186 to 287 (KIKMRTWKSW…KYIQRSLEKD (102 aa)). Residues 288–308 (FKTVVEISPVIWFVAVLFLLT) form a helical membrane-spanning segment. Topologically, residues 309-317 (NSYGLRSYL) are extracellular. A helical membrane pass occupies residues 318 to 338 (WLPFIPLVVILIVGTKLEVII). Residues 339-371 (TKLGLRIQEKGDVVRGAPVVQPGDDLFWFGKPR) are Cytoplasmic-facing. Residues 372-392 (FILFLIHLVLFTNAFQLAFFA) form a helical membrane-spanning segment. At 393–415 (WSTYEFNLNNCFHESTADVVIRL) the chain is on the extracellular side. The helical transmembrane segment at 416–436 (VVGAVVQILCSYVTLPLYALV) threads the bilayer. Topologically, residues 437–573 (TQMGSKMKPT…KSLRDFSFKK (137 aa)) are cytoplasmic. The interval 450–471 (DRVATALKKWHHTAKNETKHGR) is calmodulin-binding. The segment at 462-573 (TAKNETKHGR…KSLRDFSFKK (112 aa)) is disordered. 2 stretches are compositionally biased toward polar residues: residues 473-490 (SGSN…THGS) and 498-513 (NFNN…SPSP). A Phosphoserine modification is found at serine 512. Basic and acidic residues predominate over residues 522 to 548 (EHQFWDPESQHQEAETSTHHSLAHESS).

This sequence belongs to the MLO family.

The protein resides in the membrane. May be involved in modulation of pathogen defense and leaf cell death. Activity seems to be regulated by Ca(2+)-dependent calmodulin binding and seems not to require heterotrimeric G proteins. The protein is MLO-like protein 2 (MLO2) of Arabidopsis thaliana (Mouse-ear cress).